Reading from the N-terminus, the 346-residue chain is Magnesium-protoporphyrin IX monomethyl ester [oxidative] cyclase (346 aa).

Belongs to the AcsF family. Requires Fe cation as cofactor.

It catalyses the reaction Mg-protoporphyrin IX 13-monomethyl ester + 3 NADPH + 3 O2 + 2 H(+) = 3,8-divinyl protochlorophyllide a + 3 NADP(+) + 5 H2O. The protein operates within porphyrin-containing compound metabolism; chlorophyll biosynthesis (light-independent). In terms of biological role, catalyzes the formation of the isocyclic ring in chlorophyll biosynthesis. Mediates the cyclase reaction, which results in the formation of divinylprotochlorophyllide (Pchlide) characteristic of all chlorophylls from magnesium-protoporphyrin IX 13-monomethyl ester (MgPMME). In Gloeobacter violaceus (strain ATCC 29082 / PCC 7421), this protein is Magnesium-protoporphyrin IX monomethyl ester [oxidative] cyclase.